We begin with the raw amino-acid sequence, 312 residues long: 6-hydroxy-3-succinoylpyridine 3-monooxygenase HspA (312 aa).

The NYN domain occupies 14 to 210; that stretch reads IYIDGYNFYY…RSANTDLIKF (197 aa).

The catalysed reaction is 4-(6-hydroxypyridin-3-yl)-4-oxobutanoate + 2 NADH + O2 + 2 H(+) = 2,5-dihydroxypyridine + succinate semialdehyde + 2 NAD(+) + H2O. Its pathway is alkaloid degradation; nicotine degradation. Functionally, involved in the nicotine degradation. Catalyzes the cleavage of 6-hydroxy-3-succinoylpyridine (HSP) by incorporation of oxygen at the 3-position to produce to 2,5-dihydroxypyridine (DHP) and succinic semialdehyde. The sequence is that of 6-hydroxy-3-succinoylpyridine 3-monooxygenase HspA from Pseudomonas putida (strain DSM 28022 / S16).